We begin with the raw amino-acid sequence, 91 residues long: Cytochrome b-c1 complex subunit 10, mitochondrial (91 aa).

Over 1–34 (MFATSILRSAYPAYKSPYGPKYQYQPHIDGITPK) the chain is Mitochondrial matrix. The chain crosses the membrane as a helical span at residues 35-58 (QLVRILPTAAAWTGVALFAVVYYA). Topologically, residues 59–91 (SGIPRLRRDVLQRIPYLGERYFVNEIPASDNPF) are mitochondrial intermembrane.

This sequence belongs to the UQCR11/QCR10 family. As to quaternary structure, component of the ubiquinol-cytochrome c oxidoreductase (cytochrome b-c1 complex, complex III, CIII), a multisubunit enzyme composed of 10 subunits. The complex is composed of 3 respiratory subunits cytochrome b (cob), cytochrome c1 (cyt-1) and Rieske protein (fes-1), 2 core protein subunits pep and ucr-1, and 5 low-molecular weight protein subunits qcr6, qcr7, qcr8, qcr9 and probably NCU16844/qcr10. The complex exists as an obligatory dimer and forms supercomplexes (SCs) in the inner mitochondrial membrane with NADH-ubiquinone oxidoreductase (complex I, CI) and cytochrome c oxidase (complex IV, CIV), resulting in different assemblies (supercomplexes SCI(1)III(2), SCIII(2)IV(1) and SCIII(2)IV(2) as well as higher order I(x)III(y)IV(z) megacomplexes).

It is found in the mitochondrion inner membrane. Its function is as follows. Component of the ubiquinol-cytochrome c oxidoreductase, a multisubunit transmembrane complex that is part of the mitochondrial electron transport chain which drives oxidative phosphorylation. The respiratory chain contains 3 multisubunit complexes succinate dehydrogenase (complex II, CII), ubiquinol-cytochrome c oxidoreductase (cytochrome b-c1 complex, complex III, CIII) and cytochrome c oxidase (complex IV, CIV), that cooperate to transfer electrons derived from NADH and succinate to molecular oxygen, creating an electrochemical gradient over the inner membrane that drives transmembrane transport and the ATP synthase. The cytochrome b-c1 complex catalyzes electron transfer from ubiquinol to cytochrome c, linking this redox reaction to translocation of protons across the mitochondrial inner membrane, with protons being carried across the membrane as hydrogens on the quinol. In the process called Q cycle, 2 protons are consumed from the matrix, 4 protons are released into the intermembrane space and 2 electrons are passed to cytochrome c. The chain is Cytochrome b-c1 complex subunit 10, mitochondrial from Neurospora crassa (strain ATCC 24698 / 74-OR23-1A / CBS 708.71 / DSM 1257 / FGSC 987).